The following is a 263-amino-acid chain: Aminoglycoside 3'-phosphotransferase (263 aa).

Asp189 serves as the catalytic Proton acceptor.

This sequence belongs to the aminoglycoside phosphotransferase family.

The catalysed reaction is kanamycin A + ATP = kanamycin 3'-phosphate + ADP + H(+). Functionally, resistance to kanamycin and structurally-related aminoglycosides, including amikacin. This is Aminoglycoside 3'-phosphotransferase (aphA) from Staphylococcus aureus.